Consider the following 49-residue polypeptide: uncharacterized protein (49 aa).

Residues 20–42 (LFLVGLTIGKMATSRILSFLGFI) form a helical membrane-spanning segment.

The protein resides in the membrane. This is an uncharacterized protein from Dictyostelium discoideum (Social amoeba).